The primary structure comprises 598 residues: Arylsulfate sulfotransferase AssT (598 aa).

An N-terminal signal peptide occupies residues 1 to 27 (MFHPYRKTLLSGTVALALGLFATGAIA). 4-methylumbelliferone is bound by residues His279 and His383. Cysteines 445 and 451 form a disulfide. His463 contributes to the 4-methylumbelliferone binding site. Catalysis depends on His463, which acts as the Nucleophile; sulfurylated histidine covalent intermediate.

The protein belongs to the aryl sulfotransferase family. As to quaternary structure, monomer.

The protein resides in the periplasm. The catalysed reaction is an aryl sulfate + a phenol = an aryl sulfate + a phenol. The enzyme catalyses 4-methylumbelliferone sulfate + phenol = phenyl sulfate + 4-methylumbelliferone. It carries out the reaction 2-naphthyl sulfate + phenol = phenyl sulfate + 2-naphthol. Functionally, catalyzes the transfer of a sulfate group from a phenyl sulfate ester to other phenolic compounds. Is able to use several substrate donors and acceptors in vitro: using phenol as an acceptor substrate, 4-methylumbelliferyl sulfate is the best donor substrate, followed by beta-naphthyl sulfate, p-nitrophenyl sulfate (PNS), and alpha-naphthyl sulfate; using PNS as a donor substrate, alpha-naphthol is the best acceptor substrate, followed by phenol, resorcinol, p-acetaminophen, tyramine, and tyrosine. Cannot use 3'-phosphoadenosine-5'-phophosulfate (PAPS), the donor substrate of mammalian sulfotransferase. May be a detoxifying enzyme, converting toxic phenolic compounds into non-toxic materials. The polypeptide is Arylsulfate sulfotransferase AssT (Lelliottia amnigena (Enterobacter amnigenus)).